Consider the following 267-residue polypeptide: 2-keto-3-deoxy-L-rhamnonate aldolase (267 aa).

Histidine 49 serves as the catalytic Proton acceptor. Glutamine 151 provides a ligand contact to substrate. Residue glutamate 153 participates in Mg(2+) binding. Substrate contacts are provided by alanine 178 and aspartate 179. Mg(2+) is bound at residue aspartate 179.

This sequence belongs to the HpcH/HpaI aldolase family. KDR aldolase subfamily. Homohexamer. Mg(2+) is required as a cofactor.

The enzyme catalyses 2-dehydro-3-deoxy-L-rhamnonate = (S)-lactaldehyde + pyruvate. Catalyzes the reversible retro-aldol cleavage of 2-keto-3-deoxy-L-rhamnonate (KDR) to pyruvate and lactaldehyde. This Salmonella enteritidis PT4 (strain P125109) protein is 2-keto-3-deoxy-L-rhamnonate aldolase.